Here is a 179-residue protein sequence, read N- to C-terminus: UPF0227 protein SO_2251 (179 aa).

Belongs to the UPF0227 family.

The polypeptide is UPF0227 protein SO_2251 (Shewanella oneidensis (strain ATCC 700550 / JCM 31522 / CIP 106686 / LMG 19005 / NCIMB 14063 / MR-1)).